The primary structure comprises 238 residues: 2,3-bisphosphoglycerate-dependent phosphoglycerate mutase (238 aa).

Residues 8–15, 21–22, Arg60, 86–89, Lys97, 113–114, and 182–183 contribute to the substrate site; these read RHGQSEWN, TG, ERHY, RR, and GN. Residue His9 is the Tele-phosphohistidine intermediate of the active site. Glu86 serves as the catalytic Proton donor/acceptor.

The protein belongs to the phosphoglycerate mutase family. BPG-dependent PGAM subfamily. Homodimer.

The catalysed reaction is (2R)-2-phosphoglycerate = (2R)-3-phosphoglycerate. The protein operates within carbohydrate degradation; glycolysis; pyruvate from D-glyceraldehyde 3-phosphate: step 3/5. Functionally, catalyzes the interconversion of 2-phosphoglycerate and 3-phosphoglycerate. This chain is 2,3-bisphosphoglycerate-dependent phosphoglycerate mutase, found in Pelagibacter ubique (strain HTCC1062).